The chain runs to 272 residues: Cytochrome c1 (272 aa).

An N-terminal signal peptide occupies residues 1–24 (MTTIVKRALVAAGMVLAIGGAAQA). Heme c-binding residues include Cys61, Cys64, His65, and Met200. The helical transmembrane segment at 244 to 261 (LGLKVLLFLGVLTAMLLA) threads the bilayer.

In terms of assembly, the main subunits of complex b-c1 are: cytochrome b, cytochrome c1 and the Rieske protein. Binds 1 heme c group covalently per subunit.

It localises to the cell membrane. In terms of biological role, component of the ubiquinol-cytochrome c reductase complex (complex III or cytochrome b-c1 complex), which is a respiratory chain that generates an electrochemical potential coupled to ATP synthesis. This Rhodospirillum rubrum protein is Cytochrome c1 (petC).